Here is a 283-residue protein sequence, read N- to C-terminus: 4-diphosphocytidyl-2-C-methyl-D-erythritol kinase (283 aa).

Residue Lys10 is part of the active site. 94–104 (PVAAGLAGGSS) lines the ATP pocket. Residue Asp136 is part of the active site.

The protein belongs to the GHMP kinase family. IspE subfamily.

The enzyme catalyses 4-CDP-2-C-methyl-D-erythritol + ATP = 4-CDP-2-C-methyl-D-erythritol 2-phosphate + ADP + H(+). It participates in isoprenoid biosynthesis; isopentenyl diphosphate biosynthesis via DXP pathway; isopentenyl diphosphate from 1-deoxy-D-xylulose 5-phosphate: step 3/6. Its function is as follows. Catalyzes the phosphorylation of the position 2 hydroxy group of 4-diphosphocytidyl-2C-methyl-D-erythritol. In Enterococcus faecalis (strain ATCC 700802 / V583), this protein is 4-diphosphocytidyl-2-C-methyl-D-erythritol kinase.